The sequence spans 528 residues: GTPase Obg (528 aa).

One can recognise an Obg domain in the interval 2 to 159 (ASFVDRVVLH…SDIVLELKSI (158 aa)). The OBG-type G domain occupies 160–343 (ADIALVGFPS…LGFAMAEIVQ (184 aa)). Residues 166 to 173 (GFPSAGKS), 191 to 195 (FTTLI), 212 to 215 (DVPG), 295 to 298 (NKVD), and 324 to 326 (SAT) each bind GTP. Residues serine 173 and threonine 193 each contribute to the Mg(2+) site. An OCT domain is found at 363–447 (PRAVNESGFK…DDGVVFDWEP (85 aa)). Positions 471–490 (DRPTRSQKRDEQIERREAKA) are disordered.

It belongs to the TRAFAC class OBG-HflX-like GTPase superfamily. OBG GTPase family. In terms of assembly, monomer. Mg(2+) serves as cofactor.

Its subcellular location is the cytoplasm. In terms of biological role, an essential GTPase which binds GTP, GDP and possibly (p)ppGpp with moderate affinity, with high nucleotide exchange rates and a fairly low GTP hydrolysis rate. Plays a role in control of the cell cycle, stress response, ribosome biogenesis and in those bacteria that undergo differentiation, in morphogenesis control. The polypeptide is GTPase Obg (Paenarthrobacter aurescens (strain TC1)).